Reading from the N-terminus, the 156-residue chain is 3-dehydroquinate dehydratase 1 (156 aa).

Catalysis depends on Y32, which acts as the Proton acceptor. Residues N84, H90, and D97 each coordinate substrate. H110 functions as the Proton donor in the catalytic mechanism. Residues 111 to 112 (LS) and R121 contribute to the substrate site.

This sequence belongs to the type-II 3-dehydroquinase family. As to quaternary structure, homododecamer.

It carries out the reaction 3-dehydroquinate = 3-dehydroshikimate + H2O. The protein operates within metabolic intermediate biosynthesis; chorismate biosynthesis; chorismate from D-erythrose 4-phosphate and phosphoenolpyruvate: step 3/7. Functionally, catalyzes a trans-dehydration via an enolate intermediate. The sequence is that of 3-dehydroquinate dehydratase 1 (aroQ1) from Ralstonia nicotianae (strain ATCC BAA-1114 / GMI1000) (Ralstonia solanacearum).